The primary structure comprises 341 residues: tRNA N6-adenosine threonylcarbamoyltransferase (341 aa).

Fe cation-binding residues include H115 and H119. Residues 137-141 (AVSGG), D170, G183, D187, and N276 contribute to the substrate site. D306 serves as a coordination point for Fe cation.

The protein belongs to the KAE1 / TsaD family. The cofactor is Fe(2+).

The protein resides in the cytoplasm. It carries out the reaction L-threonylcarbamoyladenylate + adenosine(37) in tRNA = N(6)-L-threonylcarbamoyladenosine(37) in tRNA + AMP + H(+). Functionally, required for the formation of a threonylcarbamoyl group on adenosine at position 37 (t(6)A37) in tRNAs that read codons beginning with adenine. Is involved in the transfer of the threonylcarbamoyl moiety of threonylcarbamoyl-AMP (TC-AMP) to the N6 group of A37, together with TsaE and TsaB. TsaD likely plays a direct catalytic role in this reaction. In Lacticaseibacillus casei (strain BL23) (Lactobacillus casei), this protein is tRNA N6-adenosine threonylcarbamoyltransferase.